A 407-amino-acid chain; its full sequence is Phosphopentomutase (407 aa).

Residues Asp10, Asp306, His311, Asp347, His348, and His359 each contribute to the Mn(2+) site.

This sequence belongs to the phosphopentomutase family. Mn(2+) is required as a cofactor.

It localises to the cytoplasm. The catalysed reaction is 2-deoxy-alpha-D-ribose 1-phosphate = 2-deoxy-D-ribose 5-phosphate. It carries out the reaction alpha-D-ribose 1-phosphate = D-ribose 5-phosphate. The protein operates within carbohydrate degradation; 2-deoxy-D-ribose 1-phosphate degradation; D-glyceraldehyde 3-phosphate and acetaldehyde from 2-deoxy-alpha-D-ribose 1-phosphate: step 1/2. Functionally, isomerase that catalyzes the conversion of deoxy-ribose 1-phosphate (dRib-1-P) and ribose 1-phosphate (Rib-1-P) to deoxy-ribose 5-phosphate (dRib-5-P) and ribose 5-phosphate (Rib-5-P), respectively. This chain is Phosphopentomutase, found in Shigella dysenteriae serotype 1 (strain Sd197).